Here is a 55-residue protein sequence, read N- to C-terminus: Preprotein translocase subunit SecG (55 aa).

At 1-31 (MPKNNTNENFQSGAGLIRYFNEEEIKGPALD) the chain is on the cytoplasmic side. The helical transmembrane segment at 32 to 51 (PKLIIYIGIAMAVIVELAKI) threads the bilayer. Over 52–55 (FWPV) the chain is Extracellular.

The protein belongs to the SEC61-beta family. Component of the protein translocase complex. Heterotrimer consisting of alpha (SecY), beta (SecG) and gamma (SecE) subunits. Can form oligomers of the heterotrimer.

Its subcellular location is the cell membrane. Functionally, involved in protein export. The function of the beta subunit is unknown, but it may be involved in stabilization of the trimeric complex. In Picrophilus torridus (strain ATCC 700027 / DSM 9790 / JCM 10055 / NBRC 100828 / KAW 2/3), this protein is Preprotein translocase subunit SecG.